The following is a 274-amino-acid chain: Probable lipoprotein peptidase YaeF (274 aa).

The first 20 residues, 1–20, serve as a signal peptide directing secretion; the sequence is MDKPKAYCRLFLPSFLLLSA. A lipid anchor (N-palmitoyl cysteine) is attached at C21. C21 carries the S-diacylglycerol cysteine lipid modification. Catalysis depends on C207, which acts as the Nucleophile. Catalysis depends on H257, which acts as the Proton acceptor.

It localises to the cell inner membrane. The protein is Probable lipoprotein peptidase YaeF (yaeF) of Escherichia coli (strain K12).